A 303-amino-acid polypeptide reads, in one-letter code: Glutathione transport system permease protein GsiD (303 aa).

6 consecutive transmembrane segments (helical) span residues 40–60 (AMTA…ARWI), 105–125 (LAAG…LGLL), 144–164 (LFAF…GSGI), 165–185 (ANVI…LVRG), 222–242 (IVVF…SLSF), and 266–286 (VIAP…VLAF). Residues 101–290 (AQISLAAGVF…LTVLAFNLLG (190 aa)) form the ABC transmembrane type-1 domain.

The protein belongs to the binding-protein-dependent transport system permease family. As to quaternary structure, the complex is composed of two ATP-binding proteins (GsiA), two transmembrane proteins (GsiC and GsiD) and a solute-binding protein (GsiB).

Its subcellular location is the cell inner membrane. In terms of biological role, part of the ABC transporter complex GsiABCD involved in glutathione import. Probably responsible for the translocation of the substrate across the membrane. This is Glutathione transport system permease protein GsiD from Shigella dysenteriae serotype 1 (strain Sd197).